A 698-amino-acid chain; its full sequence is tRNA (guanine(37)-N(1))-methyltransferase (698 aa).

The tract at residues S207–G242 is disordered. S-adenosyl-L-methionine-binding positions include H427, D465–L466, D494–G495, and N536.

Belongs to the class I-like SAM-binding methyltransferase superfamily. TRM5/TYW2 family. In terms of assembly, monomer.

The protein resides in the mitochondrion matrix. Its subcellular location is the nucleus. It localises to the cytoplasm. The enzyme catalyses guanosine(37) in tRNA + S-adenosyl-L-methionine = N(1)-methylguanosine(37) in tRNA + S-adenosyl-L-homocysteine + H(+). Its function is as follows. Specifically methylates the N1 position of guanosine-37 in various cytoplasmic and mitochondrial tRNAs. Methylation is not dependent on the nature of the nucleoside 5' of the target nucleoside. This is the first step in the biosynthesis of wybutosine (yW), a modified base adjacent to the anticodon of tRNAs and required for accurate decoding. This chain is tRNA (guanine(37)-N(1))-methyltransferase, found in Leishmania braziliensis.